A 305-amino-acid chain; its full sequence is uncharacterized protein (305 aa).

A disordered region spans residues 53 to 185 (SGRIGDGDDG…TGPRSSRTVG (133 aa)). Composition is skewed to basic and acidic residues over residues 95 to 116 (VEER…ERPT) and 128 to 142 (GSER…RSEG). Positions 161–171 (GNTQAPSQSAE) are enriched in polar residues. Residues 260–302 (CAICMSNFIKNQRLRVLPCDHRFHVGCVDKWLLGHSNKCPVCR) form an RING-type; atypical zinc finger.

This is an uncharacterized protein from Encephalitozoon cuniculi (strain GB-M1) (Microsporidian parasite).